The following is a 528-amino-acid chain: Bifunctional purine biosynthesis protein PurH (528 aa).

Positions 1 to 146 (MAPTALLSVS…KNHDHVAVLT (146 aa)) constitute an MGS-like domain.

It belongs to the PurH family.

The catalysed reaction is (6R)-10-formyltetrahydrofolate + 5-amino-1-(5-phospho-beta-D-ribosyl)imidazole-4-carboxamide = 5-formamido-1-(5-phospho-D-ribosyl)imidazole-4-carboxamide + (6S)-5,6,7,8-tetrahydrofolate. It catalyses the reaction IMP + H2O = 5-formamido-1-(5-phospho-D-ribosyl)imidazole-4-carboxamide. It functions in the pathway purine metabolism; IMP biosynthesis via de novo pathway; 5-formamido-1-(5-phospho-D-ribosyl)imidazole-4-carboxamide from 5-amino-1-(5-phospho-D-ribosyl)imidazole-4-carboxamide (10-formyl THF route): step 1/1. The protein operates within purine metabolism; IMP biosynthesis via de novo pathway; IMP from 5-formamido-1-(5-phospho-D-ribosyl)imidazole-4-carboxamide: step 1/1. The polypeptide is Bifunctional purine biosynthesis protein PurH (Synechococcus sp. (strain WH7803)).